We begin with the raw amino-acid sequence, 308 residues long: Ycf92-like protein (308 aa).

The next 5 helical transmembrane spans lie at 41–61 (FANN…TLIA), 75–95 (LLTL…GLGV), 153–173 (ISTI…TTAP), 192–212 (IPVT…PLVL), and 288–308 (WLAI…GNQI).

This sequence belongs to the ycf92 family.

It is found in the membrane. In Nostoc sp. (strain PCC 7120 / SAG 25.82 / UTEX 2576), this protein is Ycf92-like protein.